A 105-amino-acid polypeptide reads, in one-letter code: Pyrimidine/purine nucleoside phosphorylase (105 aa).

It belongs to the nucleoside phosphorylase PpnP family.

It catalyses the reaction a purine D-ribonucleoside + phosphate = a purine nucleobase + alpha-D-ribose 1-phosphate. The catalysed reaction is adenosine + phosphate = alpha-D-ribose 1-phosphate + adenine. The enzyme catalyses cytidine + phosphate = cytosine + alpha-D-ribose 1-phosphate. It carries out the reaction guanosine + phosphate = alpha-D-ribose 1-phosphate + guanine. It catalyses the reaction inosine + phosphate = alpha-D-ribose 1-phosphate + hypoxanthine. The catalysed reaction is thymidine + phosphate = 2-deoxy-alpha-D-ribose 1-phosphate + thymine. The enzyme catalyses uridine + phosphate = alpha-D-ribose 1-phosphate + uracil. It carries out the reaction xanthosine + phosphate = alpha-D-ribose 1-phosphate + xanthine. In terms of biological role, catalyzes the phosphorolysis of diverse nucleosides, yielding D-ribose 1-phosphate and the respective free bases. Can use uridine, adenosine, guanosine, cytidine, thymidine, inosine and xanthosine as substrates. Also catalyzes the reverse reactions. In Cupriavidus taiwanensis (strain DSM 17343 / BCRC 17206 / CCUG 44338 / CIP 107171 / LMG 19424 / R1) (Ralstonia taiwanensis (strain LMG 19424)), this protein is Pyrimidine/purine nucleoside phosphorylase.